The sequence spans 777 residues: Probable aconitate hydratase, mitochondrial (777 aa).

Residues 1 to 26 constitute a mitochondrion transit peptide; that stretch reads MNSLLRLSHLAGPAHYRALHSSSSIW. Substrate-binding positions include Gln96 and 189–191; that span reads DSH. [4Fe-4S] cluster is bound by residues Cys382, Cys445, and Cys448. Substrate is bound by residues Arg471 and Arg476. Residues 534–555 form a disordered region; the sequence is YDPGEDTFQAPSGSGQVDVSPS. The segment covering 542-555 has biased composition (polar residues); it reads QAPSGSGQVDVSPS. Substrate contacts are provided by residues Arg601 and 664–665; that span reads SR.

Belongs to the aconitase/IPM isomerase family. As to quaternary structure, monomer. [4Fe-4S] cluster serves as cofactor.

Its subcellular location is the mitochondrion. It catalyses the reaction citrate = D-threo-isocitrate. Its pathway is carbohydrate metabolism; tricarboxylic acid cycle; isocitrate from oxaloacetate: step 2/2. Its function is as follows. Catalyzes the isomerization of citrate to isocitrate via cis-aconitate. The sequence is that of Probable aconitate hydratase, mitochondrial from Caenorhabditis elegans.